Here is a 193-residue protein sequence, read N- to C-terminus: UPF0397 protein PA0141 (193 aa).

A run of 5 helical transmembrane segments spans residues 11–31 (VTIAINTAIYVILSCFASIPI), 43–63 (FLVFVAVLFGSKVGLSVGLLG), 69–89 (FFLFGNVYFNWIVCSGLLGFL), 109–129 (ILFFWLYQVFVNVLVFGLIAP), and 147–167 (GFLVVLSNILSYSLFGIFLMS).

Belongs to the UPF0397 family.

The protein localises to the cell membrane. This is UPF0397 protein PA0141 from Phytoplasma australiense.